The following is a 390-amino-acid chain: L-seryl-tRNA(Sec) selenium transferase (390 aa).

The residue at position 225 (lysine 225) is an N6-(pyridoxal phosphate)lysine.

The protein belongs to the SelA family. It depends on pyridoxal 5'-phosphate as a cofactor.

The protein resides in the cytoplasm. The enzyme catalyses L-seryl-tRNA(Sec) + selenophosphate + H(+) = L-selenocysteinyl-tRNA(Sec) + phosphate. It functions in the pathway aminoacyl-tRNA biosynthesis; selenocysteinyl-tRNA(Sec) biosynthesis; selenocysteinyl-tRNA(Sec) from L-seryl-tRNA(Sec) (bacterial route): step 1/1. Its function is as follows. Converts seryl-tRNA(Sec) to selenocysteinyl-tRNA(Sec) required for selenoprotein biosynthesis. The chain is L-seryl-tRNA(Sec) selenium transferase from Helicobacter pylori (strain P12).